The chain runs to 107 residues: DNA polymerase delta subunit 4 (107 aa).

The PCNA-interaction protein motif (PIP box) motif lies at 1 to 16 (MGRKRLITDSYPVVKR). The tract at residues 1–35 (MGRKRLITDSYPVVKRREGSAGHSKGELAPDLGEE) is disordered. The span at 15–28 (KRREGSAGHSKGEL) shows a compositional bias: basic and acidic residues.

Belongs to the DNA polymerase delta subunit 4 family. In terms of assembly, component of the tetrameric DNA polymerase delta complex (Pol-delta4), which consists of POLD1/p125, POLD2/p50, POLD3/p66/p68 and POLD4/p12, with POLD1 bearing DNA polymerase and 3' to 5' proofreading exonuclease activities. Within this complex, directly interacts with POLD1 and POLD2. Directly interacts with PCNA, as do POLD1 and POLD3; this interaction stimulates Pol-delta4 polymerase activity. As POLD1 and POLD2, directly interacts with WRNIP1; this interaction stimulates DNA polymerase delta-mediated DNA synthesis, independently of the presence of PCNA, possibly by increasing initiation frequency. Upon genotoxic stress induced by DNA damaging agents or by replication stress, POLD4 is proteolytically degraded and Pol-delta4 is converted into a trimeric form of the complex (Pol-delta3) that has an increased proofreading activity. The DNA polymerase delta complex interacts with POLDIP2; this interaction is probably mediated through direct binding to POLD2. In terms of processing, ubiquitinated; undergoes 'Lys-48'-linked ubiquitination in response to UV irradiation, leading to proteasomal degradation. This modification is partly mediated by RNF8 and by the DCX(DTL) E3 ubiquitin ligase complex (also called CRL4(CDT2)). Efficient degradation requires the presence of PCNA and is required for the inhibition of fork progression after DNA damage.

It is found in the nucleus. As a component of the tetrameric DNA polymerase delta 4 complex (Pol-delta4), plays a role in high fidelity genome replication and repair. Within this complex, increases the rate of DNA synthesis and decreases fidelity by regulating POLD1 polymerase and proofreading 3' to 5' exonuclease activity. Pol-delta4 participates in Okazaki fragment processing, through both the short flap pathway, as well as a nick translation system. Under conditions of DNA replication stress, required for the repair of broken replication forks through break-induced replication (BIR), a mechanism that may induce segmental genomic duplications of up to 200 kb. Involved in Pol-delta4 translesion synthesis (TLS) of templates carrying O6-methylguanine or abasic sites. Its degradation in response to DNA damage is required for the inhibition of fork progression and cell survival. In Bos taurus (Bovine), this protein is DNA polymerase delta subunit 4 (POLD4).